Consider the following 195-residue polypeptide: Small ribosomal subunit protein uS4 (195 aa).

The region spanning 109 to 183 is the S4 RNA-binding domain; that stretch reads RRLQTQVFKL…VKRKNLKKNQ (75 aa). Residues 165 to 195 form a disordered region; it reads PFGGGRPGRVKRKNLKKNQGGGGGAAEEEED.

It belongs to the universal ribosomal protein uS4 family. In terms of assembly, component of the small ribosomal subunit. Identified in a IGF2BP1-dependent mRNP granule complex containing untranslated mRNAs. Part of the small subunit (SSU) processome, composed of more than 70 proteins and the RNA chaperone small nucleolar RNA (snoRNA) U3.

It localises to the cytoplasm. The protein localises to the nucleus. It is found in the nucleolus. Functionally, component of the small ribosomal subunit. The ribosome is a large ribonucleoprotein complex responsible for the synthesis of proteins in the cell. Part of the small subunit (SSU) processome, first precursor of the small eukaryotic ribosomal subunit. During the assembly of the SSU processome in the nucleolus, many ribosome biogenesis factors, an RNA chaperone and ribosomal proteins associate with the nascent pre-rRNA and work in concert to generate RNA folding, modifications, rearrangements and cleavage as well as targeted degradation of pre-ribosomal RNA by the RNA exosome. In Drosophila melanogaster (Fruit fly), this protein is Small ribosomal subunit protein uS4.